The following is a 203-amino-acid chain: Holliday junction branch migration complex subunit RuvA (203 aa).

The segment at 1 to 64 (MIGRLRGIIL…EDAQLLYGFN (64 aa)) is domain I. Residues 65–142 (NKQERTLFKE…KGLHGDLFTP (78 aa)) form a domain II region. Residues 143 to 154 (AVDLVLTSPASP) are flexible linker. Residues 155–203 (GSEDAEQEAVAALVALGYKPQEASRMVSKIARPDASSETLIRDALRAAL) are domain III.

This sequence belongs to the RuvA family. In terms of assembly, homotetramer. Forms an RuvA(8)-RuvB(12)-Holliday junction (HJ) complex. HJ DNA is sandwiched between 2 RuvA tetramers; dsDNA enters through RuvA and exits via RuvB. An RuvB hexamer assembles on each DNA strand where it exits the tetramer. Each RuvB hexamer is contacted by two RuvA subunits (via domain III) on 2 adjacent RuvB subunits; this complex drives branch migration. In the full resolvosome a probable DNA-RuvA(4)-RuvB(12)-RuvC(2) complex forms which resolves the HJ.

The protein localises to the cytoplasm. Functionally, the RuvA-RuvB-RuvC complex processes Holliday junction (HJ) DNA during genetic recombination and DNA repair, while the RuvA-RuvB complex plays an important role in the rescue of blocked DNA replication forks via replication fork reversal (RFR). RuvA specifically binds to HJ cruciform DNA, conferring on it an open structure. The RuvB hexamer acts as an ATP-dependent pump, pulling dsDNA into and through the RuvAB complex. HJ branch migration allows RuvC to scan DNA until it finds its consensus sequence, where it cleaves and resolves the cruciform DNA. The protein is Holliday junction branch migration complex subunit RuvA of Salmonella schwarzengrund (strain CVM19633).